The chain runs to 464 residues: 2-oxoadipate dioxygenase/decarboxylase (464 aa).

His-70, Arg-74, and His-226 together coordinate 2-oxoadipate. His-70 is a binding site for Fe(2+). Positions 226 and 294 each coordinate Fe(2+). Position 402 (Val-402) interacts with 2-oxoadipate.

Belongs to the 2-oxoadipate dioxygenase/decarboxylase family. Fe(2+) is required as a cofactor.

It catalyses the reaction 2-oxoadipate + O2 = (R)-2-hydroxyglutarate + CO2. It functions in the pathway amino-acid degradation. Inhibited by EDTA. In terms of biological role, catalyzes the decarboxylation and hydroxylation of 2-oxoadipate (2OA) to form D-2-hydroxyglutarate (D-2-HGA). Is specific for 2-oxoadipate. Is involved in a D-lysine catabolic pathway. The sequence is that of 2-oxoadipate dioxygenase/decarboxylase from Pseudomonas putida (strain ATCC 47054 / DSM 6125 / CFBP 8728 / NCIMB 11950 / KT2440).